A 567-amino-acid chain; its full sequence is Dihydrolipoyllysine-residue acetyltransferase component of pyruvate dehydrogenase complex (567 aa).

Lipoyl-binding domains lie at 2 to 75 (SKQI…LVLE) and 108 to 181 (IVEV…MRFE). An N6-lipoyllysine mark is found at Lys41 and Lys147. Over residues 192-238 (SAPASTSAPQTAAPATTAQAPQAAAPDTTAQAPQAAAPDTTAQAAQS) the composition is skewed to low complexity. The tract at residues 192–249 (SAPASTSAPQTAAPATTAQAPQAAAPDTTAQAPQAAAPDTTAQAAQSNNNVSGLSQEQ) is disordered. Polar residues predominate over residues 239–249 (NNNVSGLSQEQ). Positions 258 to 295 (HATPVIRRLAREFGVNLDKVKGTGRKGRIVKEDIEAYV) constitute a Peripheral subunit-binding (PSBD) domain. Catalysis depends on residues Cys484, His540, and Asp544.

This sequence belongs to the 2-oxoacid dehydrogenase family. As to quaternary structure, forms a 24-polypeptide structural core with octahedral symmetry. (R)-lipoate is required as a cofactor.

It carries out the reaction N(6)-[(R)-dihydrolipoyl]-L-lysyl-[protein] + acetyl-CoA = N(6)-[(R)-S(8)-acetyldihydrolipoyl]-L-lysyl-[protein] + CoA. In terms of biological role, the pyruvate dehydrogenase complex catalyzes the overall conversion of pyruvate to acetyl-CoA and CO(2). It contains multiple copies of three enzymatic components: pyruvate dehydrogenase (E1), dihydrolipoamide acetyltransferase (E2) and lipoamide dehydrogenase (E3). The protein is Dihydrolipoyllysine-residue acetyltransferase component of pyruvate dehydrogenase complex (aceF) of Haemophilus influenzae (strain ATCC 51907 / DSM 11121 / KW20 / Rd).